We begin with the raw amino-acid sequence, 272 residues long: uncharacterized protein (272 aa).

Basic and acidic residues-rich tracts occupy residues 136–156 (VRRE…HIDI) and 231–240 (GCKESRRNEP). 2 disordered regions span residues 136–157 (VRRE…IDIH) and 174–272 (VKPK…WAAF). Residues 243–252 (DLSQLKKNLP) show a composition bias toward polar residues. Residues 253 to 272 (STAGSGSSKSTGAASGWAAF) are compositionally biased toward low complexity.

This is an uncharacterized protein from Arabidopsis thaliana (Mouse-ear cress).